Reading from the N-terminus, the 717-residue chain is Mitochondrial potassium channel ATP-binding subunit (717 aa).

Residues 1 to 25 (MLVHLFRFGIRGGPVPGWSLQSLRF) constitute a mitochondrion transit peptide. Transmembrane regions (helical) follow at residues 127 to 147 (LLAL…NVQI), 178 to 198 (VQLL…LVLL), 278 to 298 (LMLA…GSGL), and 365 to 385 (NIAF…LVAG). The region spanning 132–419 (AAIVLALGAA…LSVLFGQVVR (288 aa)) is the ABC transmembrane type-1 domain. The ABC transporter domain occupies 454-691 (ITFQNVTFSY…GGLYSELIRR (238 aa)). ATP is bound at residue 489–496 (GQSGGGKT). The segment at 695–717 (DASLTSTPPAEKPEDPKSCQSKA) is disordered.

Belongs to the ABC transporter superfamily. ABCB family. Multidrug resistance exporter (TC 3.A.1.201) subfamily. In terms of assembly, the mitochondrial potassium channel (mitoK(ATP)) is composed of 4 subunits of CCDC51/MITOK and 4 subunits of ABCB8/MITOSUR. Interacts with PAAT. Interacts with NRP1; NRP1 regulates ABCB8/MITOSUR protein levels in mitochondria.

Its subcellular location is the mitochondrion inner membrane. Its activity is regulated as follows. Channel activity inhibited by ATP via ABCB8/MITOSUR subunit. Its function is as follows. ATP-binding subunit of the mitochondrial ATP-gated potassium channel (mitoK(ATP)). Together with pore-forming subunit CCDC51/MITOK of the mitoK(ATP) channel, mediates ATP-dependent potassium currents across the mitochondrial inner membrane. An increase in ATP intracellular levels closes the channel, inhibiting K(+) transport, whereas a decrease in ATP levels enhances K(+) uptake in the mitochondrial matrix. Plays a role in mitochondrial iron transport. Required for maintenance of normal cardiac function, possibly by influencing mitochondrial iron export and regulating the maturation of cytosolic iron sulfur cluster-containing enzymes. The sequence is that of Mitochondrial potassium channel ATP-binding subunit from Mus musculus (Mouse).